The chain runs to 57 residues: Stress response protein (57 aa).

Residues 6-10 carry the Nuclear localization signal motif; that stretch reads RKERR.

Mesophyll protoplasts.

It localises to the nucleus. Stress response. May play a role in the reentering of protoplasts into the cell cycle. This chain is Stress response protein, found in Nicotiana sylvestris (Wood tobacco).